The primary structure comprises 50 residues: Conotoxin Cal6.19 (50 aa).

An N-terminal signal peptide occupies residues 1 to 22 (MKVTCVLVLTLMALTVCQVATA). Disulfide bonds link Cys24–Cys37, Cys30–Cys41, and Cys36–Cys46.

In terms of tissue distribution, expressed by the venom duct.

It localises to the secreted. Functionally, probable neurotoxin. This chain is Conotoxin Cal6.19, found in Californiconus californicus (California cone).